Reading from the N-terminus, the 498-residue chain is MGQIVTMFEALPHIIDEVINIVIIVLIVITGIKAVYNFATCGIFALISFLLLAGRSCGMYGLKGPDIYKGVYQFKSVEFDMSHLNLTMPNACSANNSHHYISMGTSGLELTFTNDSIISHNFCNLTSAFNKKTFDHTLMSIVSSLHLSIRGNSNYKAVSCDFNNGITIQYNLTFSDAQSAQSQCRTFRGRVLDMFRTAFGGKYMRSGWGWTGSDGKTTWCSQTSYQYLIIQNRTWENHCTYAGPFGMSRILLSQEKTKFFTRRLAGTFTWTLSDSSGVENPGGYCLTKWMILAAELKCFGNTAVAKCNVNHDAEFCDMLRLIDYNKAALSKFKEDVESALHLFKTTVNSLISDQLLMRNHLRDLMGVPYCNYSKFWYLEHAKTGETSVPKCWLVTNGSYLNETHFSDQIEQEADNMITEMLRKDYIKRQGSTPLALMDLLMFSTSAYLVSIFLHLVKIPTHRHIKGGSCPKPHRLTNKGICSCGAFKVPGVKTVWKRR.

Gly2 carries N-myristoyl glycine; by host lipidation. Over 2–17 the chain is Extracellular; that stretch reads GQIVTMFEALPHIIDE. The helical transmembrane segment at 18 to 33 threads the bilayer; that stretch reads VINIVIIVLIVITGIK. At 34-58 the chain is on the cytoplasmic side; it reads AVYNFATCGIFALISFLLLAGRSCG. Cys57 serves as a coordination point for Zn(2+). Residues 59–438 lie on the Extracellular side of the membrane; the sequence is MYGLKGPDIY…QGSTPLALMD (380 aa). 5 N-linked (GlcNAc...) asparagine; by host glycosylation sites follow: Asn85, Asn95, Asn114, Asn124, and Asn171. Disulfide bonds link Cys92–Cys239, Cys123–Cys160, Cys184–Cys220, Cys285–Cys298, Cys307–Cys316, and Cys370–Cys391. N-linked (GlcNAc...) asparagine; by host glycosylation is present at Asn232. N-linked (GlcNAc...) asparagine; by host glycans are attached at residues Asn371, Asn396, and Asn401. The helical transmembrane segment at 439-459 threads the bilayer; the sequence is LLMFSTSAYLVSIFLHLVKIP. Residues 460–498 lie on the Cytoplasmic side of the membrane; the sequence is THRHIKGGSCPKPHRLTNKGICSCGAFKVPGVKTVWKRR. Zn(2+)-binding residues include His461, His463, Cys469, His473, Cys481, and Cys483.

Belongs to the arenaviridae GPC protein family. Interacts with glycoprotein G2. Part of the GP complex (GP-C) together with glycoprotein G1 and glycoprotein G2. The GP-complex interacts with protein Z, which interacts with ribonucleocapsid; these interactions may induce virion budding. In terms of assembly, homotrimer; disulfide-linked. In pre-fusion state, G1 homotrimers bind G2 homotrimers via ionic interactions. Part of the GP complex (GP-C) together with glycoprotein G2 and the stable signal peptide. Interacts with the primary host receptor DAG1 on the cell surface. The GP-complex interacts with protein Z, which interacts with ribonucleocapsid; these interactions may induce virion budding. As to quaternary structure, homotrimer. Interacts with the stable signal peptide. In pre-fusion state, G2 homotrimers bind G1 homotrimers via ionic interactions. Part of the GP complex (GP-C) together with glycoprotein G1 and the stable signal peptide. Acidification in the endosome triggers rearrangements, which ultimately leads to a 6 helix bundle formed by the two heptad repeat domains (HR1 and HR2) in post-fusion state. The GP-complex interacts with protein Z, which interacts with ribonucleocapsid; these interactions may induce virion budding. Post-translationally, specific enzymatic cleavages in vivo yield mature proteins. GP-C polyprotein is cleaved in the endoplasmic reticulum by the host protease MBTPS1. Only cleaved glycoprotein is incorporated into virions. In terms of processing, the SSP remains stably associated with the GP complex following cleavage by signal peptidase and plays crucial roles in the trafficking of GP through the secretory pathway. Myristoylation is necessary for GP2-mediated fusion activity. Inhibition of host myristoylation by the compound DDD85646 leads to the abrogation of GP2-mediated fusion upon exposure to low pH and inhibition of viral multiplication.

The protein localises to the virion membrane. Its subcellular location is the host endoplasmic reticulum membrane. The protein resides in the host Golgi apparatus membrane. It is found in the host cell membrane. Functions as a cleaved signal peptide that is retained as the third component of the GP complex (GP-C). Helps to stabilize the spike complex in its native conformation. The SSP is required for efficient glycoprotein expression, post-translational maturation cleavage of G1 and G2, glycoprotein transport to the cell surface plasma membrane, formation of infectious virus particles, and acid pH-dependent glycoprotein-mediated cell fusion. Its function is as follows. Forms the virion spikes together with glycoprotein G2. The glycoprotein spike trimers are connected to the underlying matrix. Interacts with the host receptor. Mediates virus attachment to the host primary receptor alpha-dystroglycan DAG1 (alpha-DG) at the cell surface. Down-modulates host DAG1. In terms of biological role, forms the virion spikes together with glycoprotein G1. The glycoprotein spike trimers are connected to the underlying matrix. Class I viral fusion protein that directs fusion of viral and host endosomal membranes, leading to delivery of the nucleocapsid into the cytoplasm. Membrane fusion is mediated by irreversible conformational changes induced by acidification. This Homo sapiens (Human) protein is Pre-glycoprotein polyprotein GP complex.